We begin with the raw amino-acid sequence, 236 residues long: 2-C-methyl-D-erythritol 4-phosphate cytidylyltransferase (236 aa).

It belongs to the IspD/TarI cytidylyltransferase family. IspD subfamily. As to quaternary structure, homodimer.

It carries out the reaction 2-C-methyl-D-erythritol 4-phosphate + CTP + H(+) = 4-CDP-2-C-methyl-D-erythritol + diphosphate. The protein operates within isoprenoid biosynthesis; isopentenyl diphosphate biosynthesis via DXP pathway; isopentenyl diphosphate from 1-deoxy-D-xylulose 5-phosphate: step 2/6. Catalyzes the formation of 4-diphosphocytidyl-2-C-methyl-D-erythritol from CTP and 2-C-methyl-D-erythritol 4-phosphate (MEP). This chain is 2-C-methyl-D-erythritol 4-phosphate cytidylyltransferase, found in Escherichia coli O17:K52:H18 (strain UMN026 / ExPEC).